We begin with the raw amino-acid sequence, 288 residues long: 4-hydroxybenzoate octaprenyltransferase (288 aa).

The next 8 membrane-spanning stretches (helical) occupy residues 23–43, 46–66, 98–118, 141–161, 163–183, 213–233, 234–254, and 268–288; these read IGSL…GRGI, AKIL…GCVV, ILFV…NSMT, LPQV…FAAV, ESLP…TVAY, LIIG…GWLM, NLGG…THQQ, and AFLN…ISYW.

This sequence belongs to the UbiA prenyltransferase family. It depends on Mg(2+) as a cofactor.

Its subcellular location is the cell inner membrane. The enzyme catalyses all-trans-octaprenyl diphosphate + 4-hydroxybenzoate = 4-hydroxy-3-(all-trans-octaprenyl)benzoate + diphosphate. It participates in cofactor biosynthesis; ubiquinone biosynthesis. In terms of biological role, catalyzes the prenylation of para-hydroxybenzoate (PHB) with an all-trans polyprenyl group. Mediates the second step in the final reaction sequence of ubiquinone-8 (UQ-8) biosynthesis, which is the condensation of the polyisoprenoid side chain with PHB, generating the first membrane-bound Q intermediate 3-octaprenyl-4-hydroxybenzoate. The sequence is that of 4-hydroxybenzoate octaprenyltransferase from Yersinia pestis bv. Antiqua (strain Antiqua).